Here is a 308-residue protein sequence, read N- to C-terminus: MRKKVLLMGRSGSGKSSMRSIVFSNYVAKDTRRLGATIDIEHSHVRFLGNLVLNLWDCGGQEAFMENYLSAQRDHIFRNVQVLIYVFDVESREFERDLVTFRNCLEATVANSPQARVFCLIHKMDLVQEDLRDLVFEERKAILLETSKDLETTCLATSIWDETLFKAWSAIVYTLIPNTPTLESHLREFAKAAEAAEVILFERTTFLVISSYSSESNPATDAHRFEKISNIVKQFKLSCSKMQAQFTTFELRGGNFSAFIVPYTEDTYILVVIADPEIESAVTLMNIQSARRFIEASKSASDGIQLQP.

GTP contacts are provided by serine 11, glycine 14, lysine 15, serine 16, serine 17, threonine 31, threonine 37, glycine 60, histidine 122, aspartate 125, and isoleucine 159.

The protein belongs to the GTR/RAG GTP-binding protein family. Component of the GSE complex.

Its subcellular location is the vacuole membrane. It is found in the cytoplasm. It localises to the nucleus. The enzyme catalyses GTP + H2O = GDP + phosphate + H(+). GTPase involved in activation of the TORC1 signaling pathway, which promotes growth and represses autophagy in nutrient-rich conditions. Also required for TORC1 inactivation during nitrogen starvation. The sequence is that of GTP-binding protein gtr1 (gtr1) from Schizosaccharomyces pombe (strain 972 / ATCC 24843) (Fission yeast).